The primary structure comprises 218 residues: Sec-independent protein translocase protein TatB (218 aa).

The chain crosses the membrane as a helical span at residues Met-1–Gly-21. Disordered regions lie at residues Ala-126–Lys-145 and Ser-174–Arg-218. Over residues His-199–Arg-218 the composition is skewed to basic and acidic residues.

Belongs to the TatB family. In terms of assembly, the Tat system comprises two distinct complexes: a TatABC complex, containing multiple copies of TatA, TatB and TatC subunits, and a separate TatA complex, containing only TatA subunits. Substrates initially bind to the TatABC complex, which probably triggers association of the separate TatA complex to form the active translocon.

Its subcellular location is the cell inner membrane. Part of the twin-arginine translocation (Tat) system that transports large folded proteins containing a characteristic twin-arginine motif in their signal peptide across membranes. Together with TatC, TatB is part of a receptor directly interacting with Tat signal peptides. TatB may form an oligomeric binding site that transiently accommodates folded Tat precursor proteins before their translocation. In Yersinia enterocolitica serotype O:8 / biotype 1B (strain NCTC 13174 / 8081), this protein is Sec-independent protein translocase protein TatB.